We begin with the raw amino-acid sequence, 229 residues long: Cytidylate kinase (229 aa).

An ATP-binding site is contributed by 10–18; the sequence is GFSSCGKST.

The protein belongs to the cytidylate kinase family. Type 1 subfamily.

Its subcellular location is the cytoplasm. The enzyme catalyses CMP + ATP = CDP + ADP. It carries out the reaction dCMP + ATP = dCDP + ADP. The chain is Cytidylate kinase from Bacteroides thetaiotaomicron (strain ATCC 29148 / DSM 2079 / JCM 5827 / CCUG 10774 / NCTC 10582 / VPI-5482 / E50).